A 217-amino-acid chain; its full sequence is Small ribosomal subunit protein uS3c (217 aa).

Positions I39 to T109 constitute a KH type-2 domain.

Belongs to the universal ribosomal protein uS3 family. Part of the 30S ribosomal subunit.

It localises to the plastid. It is found in the chloroplast. The chain is Small ribosomal subunit protein uS3c (rps3) from Gracilaria tenuistipitata var. liui (Red alga).